Reading from the N-terminus, the 173-residue chain is RNA pyrophosphohydrolase (173 aa).

Residues 11 to 164 (PYRKCVGIVV…KKHVYMKVVS (154 aa)) enclose the Nudix hydrolase domain. Residues 52–73 (GGIDEDEKPLDAAYRELYEETG) carry the Nudix box motif.

The protein belongs to the Nudix hydrolase family. RppH subfamily. A divalent metal cation serves as cofactor.

In terms of biological role, accelerates the degradation of transcripts by removing pyrophosphate from the 5'-end of triphosphorylated RNA, leading to a more labile monophosphorylated state that can stimulate subsequent ribonuclease cleavage. The protein is RNA pyrophosphohydrolase of Bartonella tribocorum (strain CIP 105476 / IBS 506).